A 643-amino-acid chain; its full sequence is Hypoxia up-regulated protein 1 (643 aa).

A signal peptide spans 1-22 (MRPLVCVFTMFLLALLSSNTES). The disordered stretch occupies residues 565-643 (LGNTISSLFG…EEEKSEPQEE (79 aa)). Positions 590–610 (VQEEDEVPTEPTKEEEQESAD) are enriched in acidic residues. 2 stretches are compositionally biased toward basic and acidic residues: residues 611-621 (AADKQKDKEKG) and 630-643 (EGKK…PQEE).

Belongs to the heat shock protein 70 family.

Its subcellular location is the endoplasmic reticulum lumen. Its function is as follows. Has a pivotal role in cytoprotective cellular mechanisms triggered by oxygen deprivation. May play a role as a molecular chaperone and participate in protein folding. The protein is Hypoxia up-regulated protein 1 (hyou1) of Xenopus tropicalis (Western clawed frog).